Consider the following 182-residue polypeptide: LPS-assembly lipoprotein LptE (182 aa).

Residues 1–19 form the signal peptide; that stretch reads MRHRILTLLLGLAVLVTAG. Cys-20 is lipidated: N-palmitoyl cysteine. Residue Cys-20 is the site of S-diacylglycerol cysteine attachment.

Belongs to the LptE lipoprotein family. In terms of assembly, component of the lipopolysaccharide transport and assembly complex. Interacts with LptD.

The protein resides in the cell outer membrane. Its function is as follows. Together with LptD, is involved in the assembly of lipopolysaccharide (LPS) at the surface of the outer membrane. Required for the proper assembly of LptD. Binds LPS and may serve as the LPS recognition site at the outer membrane. The polypeptide is LPS-assembly lipoprotein LptE (Photorhabdus laumondii subsp. laumondii (strain DSM 15139 / CIP 105565 / TT01) (Photorhabdus luminescens subsp. laumondii)).